Reading from the N-terminus, the 92-residue chain is Small ribosomal subunit protein uS19c (92 aa).

Belongs to the universal ribosomal protein uS19 family.

It is found in the plastid. The protein resides in the chloroplast. Functionally, protein S19 forms a complex with S13 that binds strongly to the 16S ribosomal RNA. This chain is Small ribosomal subunit protein uS19c, found in Angiopteris evecta (Mule's foot fern).